Here is a 79-residue protein sequence, read N- to C-terminus: Small ribosomal subunit protein bS18c (79 aa).

This sequence belongs to the bacterial ribosomal protein bS18 family. Part of the 30S ribosomal subunit.

The protein resides in the plastid. The protein localises to the chloroplast. The polypeptide is Small ribosomal subunit protein bS18c (Chaetosphaeridium globosum (Charophycean green alga)).